A 3020-amino-acid polypeptide reads, in one-letter code: Protein furry homolog (3020 aa).

Tyr-213 bears the Phosphotyrosine mark. Disordered stretches follow at residues 1378–1404, 1529–1554, and 1746–1773; these read GSSPSSPEDEVKDREGEVTASHGLKGN, ASGTTSSSNTVVAGQDSFPDPEESKI, and SSPVPDSGLNSSSTSSSISLGGSSGNLP. Ser-1382 and Ser-1383 each carry phosphoserine. The segment covering 1752–1772 has biased composition (low complexity); that stretch reads SGLNSSSTSSSISLGGSSGNL. Residues Ser-1936 and Ser-1940 each carry the phosphoserine modification. Over residues 1937 to 1956 the composition is skewed to low complexity; the sequence is RSSSPDLSSSSKLTASRKST. Disordered regions lie at residues 1937-2042 and 2355-2384; these read RSSS…PSHV and LQNSSGRDGKPRAMAVTRSASSTSSGSNSN. Positions 1966 to 1976 are enriched in gly residues; it reads PGSGGGGGGSG. Positions 2016–2042 are enriched in polar residues; the sequence is ACTQQGLSSKTRSNSSLKESLTDPSHV. A compositionally biased stretch (low complexity) spans 2369-2384; that stretch reads AVTRSASSTSSGSNSN. 2 positions are modified to phosphoserine: Ser-2427 and Ser-2428. The segment at 2439-2458 is disordered; that stretch reads TSLVSSEDGPREQENMDDTN. Phosphoserine is present on Ser-2495. Positions 2508 to 2535 are disordered; sequence EERQLSRSTPSLNKMSHEDSDESSEEDL. A Phosphothreonine; by CDK1 modification is found at Thr-2516. The span at 2526–2535 shows a compositional bias: acidic residues; sequence DSDESSEEDL. Ser-2815 carries the phosphoserine modification.

The protein belongs to the furry protein family. In terms of assembly, when phosphorylated by CDK1, interacts with PLK1; this interaction occurs in mitotic cells, but not in interphase cells, and leads to further FRY phosphorylation by PLK1. Post-translationally, phosphorylated by AURKA, CDK1 and PLK1.

The protein localises to the cytoplasm. It localises to the cytoskeleton. It is found in the microtubule organizing center. The protein resides in the centrosome. Its subcellular location is the spindle pole. Plays a crucial role in the structural integrity of mitotic centrosomes and in the maintenance of spindle bipolarity by promoting PLK1 activity at the spindle poles in early mitosis. May function as a scaffold promoting the interaction between AURKA and PLK1, thereby enhancing AURKA-mediated PLK1 phosphorylation. This Mus musculus (Mouse) protein is Protein furry homolog (Fry).